Here is an 897-residue protein sequence, read N- to C-terminus: 4-hydroxyphenylacetate decarboxylase glycyl radical subunit (897 aa).

Residues 35–770 (ESTQKLMDIY…VTLATADGRL (736 aa)) form the PFL domain. 2 residues coordinate 4-hydroxyphenylacetate: S344 and C503. C503 serves as the catalytic Cysteine radical intermediate. E505 acts as the Proton donor in catalysis. 4-hydroxyphenylacetate contacts are provided by H536 and E637. The 120-residue stretch at 778–897 (GSVSAAAGTD…EVIYRTEYDK (120 aa)) folds into the Glycine radical domain. Glycine radical is present on G873.

This sequence belongs to the glycyl radical enzyme (GRE) family. HPAD subfamily. Heterooctamer consisting of 4 large (HpdB) subunits and 4 small (HpdC) subunits, arranged as a tetramer of heterodimers. Also forms a catalytically inactive homodimer. In terms of processing, requires the activating protein CsdA to generate the key active site glycyl radical that is involved in catalysis. Post-translationally, phosphorylated on serine. Phosphorylation may trigger the formation of the active heterooctamers and thereby regulates enzyme activity.

It carries out the reaction 4-hydroxyphenylacetate + H(+) = 4-methylphenol + CO2. It catalyses the reaction 3,4-dihydroxyphenylacetate + H(+) = 4-methylcatechol + CO2. In terms of biological role, glycyl radical subunit of the HPA decarboxylase that decarboxylates phenylacetates with a hydroxyl group in the p-position. Active toward 4-hydroxyphenylacetate and 3,4-dihydroxyphenylacetate, forming 4-methylphenol and 4-methylcatechol, respectively. Is likely involved in the catabolism of aromatic amino acids such as tyrosine fermentation. 4-methylphenol (p-cresol) formation provides metabolic toxicity, which allows an active suppression of other microbes and may provide growth advantages for the producers in highly competitive environments. The large subunit is the catalytic subunit that binds the substrate. This is 4-hydroxyphenylacetate decarboxylase glycyl radical subunit from Clostridium scatologenes.